The following is a 381-amino-acid chain: Magnesium transporter MRS2-I (381 aa).

2 consecutive transmembrane segments (helical) span residues 316–336 (LFLS…GIFG) and 353–373 (WVVL…VAYA). Positions 336-338 (GMN) match the Required for magnesium transport activity motif.

This sequence belongs to the CorA metal ion transporter (MIT) (TC 1.A.35.5) family.

Its subcellular location is the membrane. Its function is as follows. Magnesium transporter that may mediate the influx of magnesium. The protein is Magnesium transporter MRS2-I (MRS2-I) of Oryza sativa subsp. indica (Rice).